Reading from the N-terminus, the 208-residue chain is 3-demethoxyubiquinol 3-hydroxylase (208 aa).

Glu-57, Glu-87, His-90, Glu-139, Glu-171, and His-174 together coordinate Fe cation.

It belongs to the COQ7 family. The cofactor is Fe cation.

The protein resides in the cell membrane. The enzyme catalyses a 5-methoxy-2-methyl-3-(all-trans-polyprenyl)benzene-1,4-diol + AH2 + O2 = a 3-demethylubiquinol + A + H2O. The protein operates within cofactor biosynthesis; ubiquinone biosynthesis. In terms of biological role, catalyzes the hydroxylation of 2-nonaprenyl-3-methyl-6-methoxy-1,4-benzoquinol during ubiquinone biosynthesis. This is 3-demethoxyubiquinol 3-hydroxylase from Burkholderia thailandensis (strain ATCC 700388 / DSM 13276 / CCUG 48851 / CIP 106301 / E264).